A 615-amino-acid chain; its full sequence is Elongation factor 4 (615 aa).

Residues 17-198 (ASIRNFCIIA…RVSRTIPAPV (182 aa)) enclose the tr-type G domain. Residues 29–34 (DHGKST) and 145–148 (NKID) each bind GTP.

This sequence belongs to the TRAFAC class translation factor GTPase superfamily. Classic translation factor GTPase family. LepA subfamily.

It localises to the cell membrane. The enzyme catalyses GTP + H2O = GDP + phosphate + H(+). Functionally, required for accurate and efficient protein synthesis under certain stress conditions. May act as a fidelity factor of the translation reaction, by catalyzing a one-codon backward translocation of tRNAs on improperly translocated ribosomes. Back-translocation proceeds from a post-translocation (POST) complex to a pre-translocation (PRE) complex, thus giving elongation factor G a second chance to translocate the tRNAs correctly. Binds to ribosomes in a GTP-dependent manner. The sequence is that of Elongation factor 4 from Clavibacter sepedonicus (Clavibacter michiganensis subsp. sepedonicus).